The primary structure comprises 464 residues: Argininosuccinate lyase (464 aa).

Belongs to the lyase 1 family. Argininosuccinate lyase subfamily.

Its subcellular location is the cytoplasm. The enzyme catalyses 2-(N(omega)-L-arginino)succinate = fumarate + L-arginine. Its pathway is amino-acid biosynthesis; L-arginine biosynthesis; L-arginine from L-ornithine and carbamoyl phosphate: step 3/3. The protein is Argininosuccinate lyase of Pseudomonas paraeruginosa (strain DSM 24068 / PA7) (Pseudomonas aeruginosa (strain PA7)).